Reading from the N-terminus, the 423-residue chain is Maltooligosaccharide ABC transporter solute-binding lipoprotein (423 aa).

The signal sequence occupies residues 1–24 (MSSKFMKSAAVLGTATLASLLLVA). A lipid anchor (N-palmitoyl cysteine) is attached at C25. The S-diacylglycerol cysteine moiety is linked to residue C25. Substrate is bound by residues Y52, D77, D83, 103-104 (DR), E148, D193, N196, 251-254 (EGAG), W274, and K307.

Belongs to the bacterial solute-binding protein 1 family.

The protein localises to the cell membrane. Functionally, part of an ABC transporter complex involved in the uptake of maltodextrins. Binds glycogen-derived linear maltooligosaccharides increasing in size from maltotriose to maltooctaose with the highest affinity for maltotriose. Has a very weak affinity for maltose. Has also a very low affinity for maltotetraitol, indicating that the binding is selective for maltooligosaccharides with an intact reducing end. In Streptococcus pneumoniae serotype 4 (strain ATCC BAA-334 / TIGR4), this protein is Maltooligosaccharide ABC transporter solute-binding lipoprotein.